Here is a 347-residue protein sequence, read N- to C-terminus: 3-isopropylmalate dehydrogenase (347 aa).

The substrate site is built by R94, R104, R128, and D219. Positions 219, 243, and 247 each coordinate Mg(2+). 279 to 291 (GSAPDIAGQGKAD) contributes to the NAD(+) binding site.

The protein belongs to the isocitrate and isopropylmalate dehydrogenases family. LeuB type 2 subfamily. As to quaternary structure, homodimer. Mg(2+) is required as a cofactor. The cofactor is Mn(2+).

It is found in the cytoplasm. The enzyme catalyses (2R,3S)-3-isopropylmalate + NAD(+) = 4-methyl-2-oxopentanoate + CO2 + NADH. Its pathway is amino-acid biosynthesis; L-leucine biosynthesis; L-leucine from 3-methyl-2-oxobutanoate: step 3/4. In terms of biological role, catalyzes the oxidation of 3-carboxy-2-hydroxy-4-methylpentanoate (3-isopropylmalate) to 3-carboxy-4-methyl-2-oxopentanoate. The product decarboxylates to 4-methyl-2 oxopentanoate. In Streptomyces griseus subsp. griseus (strain JCM 4626 / CBS 651.72 / NBRC 13350 / KCC S-0626 / ISP 5235), this protein is 3-isopropylmalate dehydrogenase.